The following is a 426-amino-acid chain: 5-methylthioadenosine/S-adenosylhomocysteine deaminase (426 aa).

Zn(2+) is bound by residues His60 and His62. Substrate is bound by residues Glu89 and His179. Zn(2+) is bound at residue His206. Substrate-binding residues include Glu209 and Asp294. Residue Asp294 coordinates Zn(2+).

It belongs to the metallo-dependent hydrolases superfamily. MTA/SAH deaminase family. Zn(2+) is required as a cofactor.

The catalysed reaction is S-adenosyl-L-homocysteine + H2O + H(+) = S-inosyl-L-homocysteine + NH4(+). It catalyses the reaction S-methyl-5'-thioadenosine + H2O + H(+) = S-methyl-5'-thioinosine + NH4(+). Its function is as follows. Catalyzes the deamination of 5-methylthioadenosine and S-adenosyl-L-homocysteine into 5-methylthioinosine and S-inosyl-L-homocysteine, respectively. Is also able to deaminate adenosine. This is 5-methylthioadenosine/S-adenosylhomocysteine deaminase from Dictyoglomus turgidum (strain DSM 6724 / Z-1310).